A 317-amino-acid polypeptide reads, in one-letter code: SURF1-like protein (317 aa).

The next 2 helical transmembrane spans lie at 78 to 98 and 293 to 313; these read GSIL…WQIY and HMNY…MWIH.

The protein belongs to the SURF1 family.

It localises to the mitochondrion inner membrane. Its function is as follows. Probably involved in the biogenesis of the COX complex. This is SURF1-like protein (sft-1) from Caenorhabditis briggsae.